The primary structure comprises 172 residues: RNA pyrophosphohydrolase (172 aa).

One can recognise a Nudix hydrolase domain in the interval Gly-6 to Lys-149. Residues Gly-38–Gly-59 carry the Nudix box motif.

This sequence belongs to the Nudix hydrolase family. RppH subfamily. A divalent metal cation serves as cofactor.

Functionally, accelerates the degradation of transcripts by removing pyrophosphate from the 5'-end of triphosphorylated RNA, leading to a more labile monophosphorylated state that can stimulate subsequent ribonuclease cleavage. The polypeptide is RNA pyrophosphohydrolase (Vibrio cholerae serotype O1 (strain ATCC 39315 / El Tor Inaba N16961)).